A 37-amino-acid polypeptide reads, in one-letter code: Large ribosomal subunit protein bL36 (37 aa).

The protein belongs to the bacterial ribosomal protein bL36 family.

The polypeptide is Large ribosomal subunit protein bL36 (Staphylococcus epidermidis (strain ATCC 35984 / DSM 28319 / BCRC 17069 / CCUG 31568 / BM 3577 / RP62A)).